A 123-amino-acid polypeptide reads, in one-letter code: UPF0738 protein BCE33L1094 (123 aa).

The protein belongs to the UPF0738 family.

The protein is UPF0738 protein BCE33L1094 of Bacillus cereus (strain ZK / E33L).